The primary structure comprises 272 residues: tRNA uridine(34) hydroxylase (272 aa).

Residues 121–217 enclose the Rhodanese domain; the sequence is SRSDVYTIDT…YFKSTGNINN (97 aa). Cys177 acts as the Cysteine persulfide intermediate in catalysis.

It belongs to the TrhO family.

The enzyme catalyses uridine(34) in tRNA + AH2 + O2 = 5-hydroxyuridine(34) in tRNA + A + H2O. Functionally, catalyzes oxygen-dependent 5-hydroxyuridine (ho5U) modification at position 34 in tRNAs. The chain is tRNA uridine(34) hydroxylase from Ehrlichia ruminantium (strain Welgevonden).